We begin with the raw amino-acid sequence, 360 residues long: Protein Wnt-2 (360 aa).

Positions 1 to 25 (MNSPLRGIWLWLPLLLTWLTPEVSS) are cleaved as a signal peptide. 11 disulfides stabilise this stretch: Cys-76/Cys-87, Cys-127/Cys-135, Cys-137/Cys-157, Cys-206/Cys-220, Cys-208/Cys-215, Cys-278/Cys-309, Cys-294/Cys-304, Cys-308/Cys-348, Cys-324/Cys-339, Cys-326/Cys-336, and Cys-331/Cys-332. The O-palmitoleoyl serine; by PORCN moiety is linked to residue Ser-212. N-linked (GlcNAc...) asparagine glycosylation is present at Asn-295.

The protein belongs to the Wnt family. Palmitoleoylation is required for efficient binding to frizzled receptors. Depalmitoleoylation leads to Wnt signaling pathway inhibition.

It is found in the secreted. Its subcellular location is the extracellular space. The protein localises to the extracellular matrix. Functionally, ligand for members of the frizzled family of seven transmembrane receptors. Probable developmental protein. May be a signaling molecule which affects the development of discrete regions of tissues. Is likely to signal over only few cell diameters. This Ateles geoffroyi (Black-handed spider monkey) protein is Protein Wnt-2 (WNT2).